A 400-amino-acid polypeptide reads, in one-letter code: Riboflavin biosynthesis protein RibBA (400 aa).

The tract at residues 1–202 is DHBP synthase; it reads MTTFGTIEQA…IADLVMYRRR (202 aa). Residues 28–29, aspartate 33, 141–145, and glutamate 165 contribute to the D-ribulose 5-phosphate site; these read RE and RTGHT. Mg(2+) is bound at residue glutamate 29. Histidine 144 serves as a coordination point for Mg(2+). Residues 203 to 400 are GTP cyclohydrolase II; it reads TEKQVELVAE…KRDRMGHLLG (198 aa). 253-257 is a binding site for GTP; the sequence is RAHSE. Zn(2+)-binding residues include cysteine 258, cysteine 269, and cysteine 271. Residues glutamine 274, 297-299, and threonine 319 contribute to the GTP site; that span reads EGR. Aspartate 331 serves as the catalytic Proton acceptor; for GTP cyclohydrolase activity. Arginine 333 acts as the Nucleophile; for GTP cyclohydrolase activity in catalysis. Residues threonine 354 and lysine 359 each contribute to the GTP site.

The protein in the N-terminal section; belongs to the DHBP synthase family. It in the C-terminal section; belongs to the GTP cyclohydrolase II family. Requires Mg(2+) as cofactor. Mn(2+) serves as cofactor. The cofactor is Zn(2+).

It carries out the reaction D-ribulose 5-phosphate = (2S)-2-hydroxy-3-oxobutyl phosphate + formate + H(+). It catalyses the reaction GTP + 4 H2O = 2,5-diamino-6-hydroxy-4-(5-phosphoribosylamino)-pyrimidine + formate + 2 phosphate + 3 H(+). It functions in the pathway cofactor biosynthesis; riboflavin biosynthesis; 2-hydroxy-3-oxobutyl phosphate from D-ribulose 5-phosphate: step 1/1. The protein operates within cofactor biosynthesis; riboflavin biosynthesis; 5-amino-6-(D-ribitylamino)uracil from GTP: step 1/4. Functionally, catalyzes the conversion of D-ribulose 5-phosphate to formate and 3,4-dihydroxy-2-butanone 4-phosphate. In terms of biological role, catalyzes the conversion of GTP to 2,5-diamino-6-ribosylamino-4(3H)-pyrimidinone 5'-phosphate (DARP), formate and pyrophosphate. This is Riboflavin biosynthesis protein RibBA from Salinispora tropica (strain ATCC BAA-916 / DSM 44818 / JCM 13857 / NBRC 105044 / CNB-440).